Reading from the N-terminus, the 231-residue chain is Aquaporin Z (231 aa).

2 helical membrane passes run 9–29 and 34–54; these read CFGTFWLVFGGCGSAVLAAGF and IGFAGVALAFGLTVLTMAFAV. The NPA 1 signature appears at 63–65; sequence NPA. The next 3 helical transmembrane spans lie at 82–102, 129–149, and 156–176; these read VGYVIAQVVGGIVAAALLYLI, YSMLSALVVELVLSAGFLLVI, and FAPAGFAPIAIGLALTLIHLI. The NPA 2 signature appears at 186-188; the sequence is NPA. Residues 202-222 traverse the membrane as a helical segment; the sequence is LEQLWFFWVVPIVGGIIGGLI.

This sequence belongs to the MIP/aquaporin (TC 1.A.8) family. Homotetramer.

Its subcellular location is the cell inner membrane. The catalysed reaction is H2O(in) = H2O(out). Functionally, channel that permits osmotically driven movement of water in both directions. It is involved in the osmoregulation and in the maintenance of cell turgor during volume expansion in rapidly growing cells. It mediates rapid entry or exit of water in response to abrupt changes in osmolarity. The protein is Aquaporin Z of Escherichia coli O157:H7.